The sequence spans 4128 residues: DNA-dependent protein kinase catalytic subunit (4128 aa).

K117 is modified (N6-acetyllysine). An HEAT 1 repeat occupies 288-323 (DNYITLFEVLSKWCSHTNVELKKAAHSALESFLRQI). A phosphoserine mark is found at S511, S686, S840, and S891. 2 HEAT repeats span residues 1001-1037 (QDTV…LKWS) and 1050-1086 (PVNS…YKEF). At S1062 the chain carries Phosphoserine. Residue K1206 is modified to N6-acetyllysine. The interaction with C1D stretch occupies residues 1501-1536 (LDPSCKSLANGLLELAFGFGGLCDHLVSLLLNSAML). A leucine-zipper region spans residues 1501-1536 (LDPSCKSLANGLLELAFGFGGLCDHLVSLLLNSAML). Residues 1720 to 1753 (PMKSDEFPPDSLKYNNYVDCMKKFLDALELSQSP) form a TPR 1 repeat. K1967 is modified (N6-acetyllysine). The segment at 2049 to 2071 (YSYSSQDRKPTTGHFQRREHQDS) is disordered. A Phosphoserine; by autocatalysis modification is found at S2053. A compositionally biased stretch (basic and acidic residues) spans 2054-2070 (QDRKPTTGHFQRREHQD). K2255 is subject to N6-acetyllysine. The interval 2432 to 3213 (LDIVYKMVAK…DHSMSVDEDE (782 aa)) is KIP-binding. At T2531 the chain carries Phosphothreonine. T2605 is subject to Phosphothreonine; by autocatalysis. At S2608 the chain carries Phosphoserine; by autocatalysis. Residues 2614 to 2635 (TQTQEGPLSDQRQKPGQVRATQ) are disordered. 2 positions are modified to phosphothreonine; by autocatalysis: T2634 and T2643. Residues 2738–2766 (EKLSLLYAKRGLMEQKLEKDIKSEFKMKQ) are may split the end of the DNA molecule, with the two strands separating around the region. The region spanning 2907 to 3539 (PTKRVRGKTC…IYPFIISSES (633 aa)) is the FAT domain. TPR repeat units follow at residues 2921 to 2954 (VLRW…TQDT) and 2956 to 2983 (NALL…LEWV). A Phosphoserine modification is found at S3206. K3241, K3260, K3638, and K3642 each carry N6-acetyllysine. The PI3K/PI4K catalytic domain occupies 3722–4053 (FDERVKVMLS…IRYAKRKLAG (332 aa)). Positions 3728-3734 (VMLSLRK) are G-loop. S3731 and S3821 each carry phosphoserine. The tract at residues 3919–3927 (GIGDRHLNN) is catalytic loop. The activation loop stretch occupies residues 3939–3964 (GIDFGHAFGSATQFLPVPELMPFRLT). S4026 is modified (phosphoserine). One can recognise an FATC domain in the interval 4096 to 4128 (SGLSEETQVKCLVDQATDPNILGRTWEGWEPWM).

The protein belongs to the PI3/PI4-kinase family. In terms of assembly, DNA-PK is a heterotrimer of PRKDC and the Ku dimer (composed of XRCC6/Ku70 and XRCC5/Ku86). Formation of this complex may be promoted by interaction with ILF3. Component of the core long-range non-homologous end joining (NHEJ) complex (also named DNA-PK complex) composed of PRKDC, LIG4, XRCC4, XRCC6/Ku70, XRCC5/Ku86 and NHEJ1/XLF. Additional component of the NHEJ complex includes PAXX. Following autophosphorylation, PRKDC dissociates from DNA. Interacts with DNA-PKcs-interacting protein (KIP) with the region upstream the kinase domain. PRKDC alone also interacts with and phosphorylates DCLRE1C, thereby activating the latent endonuclease activity of this protein. Interacts with C1D. Interacts with TTI1 and TELO2. Interacts with CIB1. Interacts with SETX. Interacts with NR4A3; the DNA-dependent protein kinase complex DNA-PK phosphorylates and activates NR4A3 and prevents NR4A3 ubiquitination and degradation. Interacts with BRAT1. Part of the HDP-RNP complex composed of at least HEXIM1, PRKDC, XRCC5, XRCC6, paraspeckle proteins (SFPQ, NONO, PSPC1, RBM14, and MATR3) and NEAT1 RNA. Interacts with KAT5. Post-translationally, autophosphorylated at two clusters, the T2609 cluster and the S2056 cluster. Autophosphorylated on Ser-2053, Thr-2605, Thr-2634 and Thr-2643. Ser-2053 and Thr-2605 are DNA damage-inducible phosphorylation sites (inducible with ionizing radiation, IR) dephosphorylated by PPP5C. Autophosphorylation induces a conformational change that leads to remodeling of the DNA-PK complex, requisite for efficient end processing and DNA repair. Autophosphorylation in trans within DNA-PK complexes loaded on DNA ends leads to the dissociation of PRKDC from DNA and the transition into the short-range NHEJ complex. Autophosphorylation of the T2609 cluster is required for hematopoietic development and protein synthesis in erythrocytes precursors. In terms of processing, S-nitrosylated by GAPDH. Polyubiquitinated by RNF144A, leading to proteasomal degradation.

Its subcellular location is the nucleus. The protein resides in the nucleolus. It localises to the cytoplasm. The protein localises to the cytosol. It catalyses the reaction L-seryl-[protein] + ATP = O-phospho-L-seryl-[protein] + ADP + H(+). The catalysed reaction is L-threonyl-[protein] + ATP = O-phospho-L-threonyl-[protein] + ADP + H(+). With respect to regulation, activity seems to be attenuated by autophosphorylation. Binding to the SL1 region of U3 small nucleolar RNA promotes auto-phosphorylation activity. Inhibited by wortmannin. In terms of biological role, serine/threonine-protein kinase that acts as a molecular sensor for DNA damage. Involved in DNA non-homologous end joining (NHEJ) required for double-strand break (DSB) repair and V(D)J recombination. Must be bound to DNA to express its catalytic properties. Promotes processing of hairpin DNA structures in V(D)J recombination by activation of the hairpin endonuclease artemis (DCLRE1C). Recruited by XRCC5 and XRCC6 to DNA ends and is required to (1) protect and align broken ends of DNA, thereby preventing their degradation, (2) and sequester the DSB for repair by NHEJ. Acts as a scaffold protein to aid the localization of DNA repair proteins to the site of damage. The assembly of the DNA-PK complex at DNA ends is also required for the NHEJ ligation step. Found at the ends of chromosomes, suggesting a further role in the maintenance of telomeric stability and the prevention of chromosomal end fusion. Also involved in modulation of transcription. As part of the DNA-PK complex, involved in the early steps of ribosome assembly by promoting the processing of precursor rRNA into mature 18S rRNA in the small-subunit processome. Binding to U3 small nucleolar RNA, recruits PRKDC and XRCC5/Ku86 to the small-subunit processome. Recognizes the substrate consensus sequence [ST]-Q. Phosphorylates 'Ser-139' of histone variant H2AX, thereby regulating DNA damage response mechanism. Phosphorylates ASF1A, DCLRE1C, c-Abl/ABL1, histone H1, HSPCA, c-jun/JUN, p53/TP53, PARP1, POU2F1, DHX9, FH, SRF, NHEJ1/XLF, XRCC1, XRCC4, XRCC5, XRCC6, WRN, MYC and RFA2. Can phosphorylate C1D not only in the presence of linear DNA but also in the presence of supercoiled DNA. Ability to phosphorylate p53/TP53 in the presence of supercoiled DNA is dependent on C1D. Acts as a regulator of the phosphatidylinositol 3-kinase/protein kinase B signal transduction by mediating phosphorylation of 'Ser-473' of protein kinase B (PKB/AKT1, PKB/AKT2, PKB/AKT3), promoting their activation. Contributes to the determination of the circadian period length by antagonizing phosphorylation of CRY1 'Ser-588' and increasing CRY1 protein stability, most likely through an indirect mechanism. Plays a role in the regulation of DNA virus-mediated innate immune response by assembling into the HDP-RNP complex, a complex that serves as a platform for IRF3 phosphorylation and subsequent innate immune response activation through the cGAS-STING pathway. Also regulates the cGAS-STING pathway by catalyzing phosphorylation of CGAS, thereby impairing CGAS oligomerization and activation. Also regulates the cGAS-STING pathway by mediating phosphorylation of PARP1. In Mus musculus (Mouse), this protein is DNA-dependent protein kinase catalytic subunit (Prkdc).